We begin with the raw amino-acid sequence, 67 residues long: Large ribosomal subunit protein bL35 (67 aa).

It belongs to the bacterial ribosomal protein bL35 family.

This chain is Large ribosomal subunit protein bL35, found in Picosynechococcus sp. (strain ATCC 27264 / PCC 7002 / PR-6) (Agmenellum quadruplicatum).